Here is a 124-residue protein sequence, read N- to C-terminus: Splicing factor 3B subunit 6-like protein (124 aa).

Residues 16 to 29 (EVNRVLYVRNLPFN) are interaction with pre-mRNA branch site. An RRM domain is found at 19–94 (RVLYVRNLPF…RYLIVLYYQH (76 aa)).

The protein localises to the nucleus. Functionally, may be necessary for the splicing of pre-mRNA. This is Splicing factor 3B subunit 6-like protein from Arabidopsis thaliana (Mouse-ear cress).